The primary structure comprises 116 residues: Putative pterin-4-alpha-carbinolamine dehydratase 1 (116 aa).

This sequence belongs to the pterin-4-alpha-carbinolamine dehydratase family.

It carries out the reaction (4aS,6R)-4a-hydroxy-L-erythro-5,6,7,8-tetrahydrobiopterin = (6R)-L-erythro-6,7-dihydrobiopterin + H2O. In Gloeobacter violaceus (strain ATCC 29082 / PCC 7421), this protein is Putative pterin-4-alpha-carbinolamine dehydratase 1.